Reading from the N-terminus, the 258-residue chain is Membrane-associated protein Vipp1 (258 aa).

Residues 217–258 are disordered; that stretch reads MLPPATPVTQAQLPPQQETTPAKSNEVVDAELDSLRKQLDQL. A compositionally biased stretch (polar residues) spans 223–239; the sequence is PVTQAQLPPQQETTPAK. Basic and acidic residues predominate over residues 249 to 258; it reads DSLRKQLDQL.

Belongs to the PspA/Vipp/IM30 family. Polymerizes to form rings, filaments and ribbons. Rings are formed by stacked rungs that tilt to give a dome-shaped curvature. Rings form with symmetries ranging from C11 (55 subunits) to C17 (119 subunits).

The protein resides in the cell inner membrane. In terms of biological role, a membrane remodeling protein capable of forming rings and/or filaments on membranes, which then curve and tubulate the bilayer. Rings will form on liposomes, altering their positive curvature so the lipid bilayer is remodeled into a negative curve as the membrane enters the ring. Ring stacks of varying lengths can be seen joining isolated liposomes. A lipid monolayer can be drawn into the center of the rings. Required for thylakoid formation. The polypeptide is Membrane-associated protein Vipp1 (Nostoc punctiforme (strain ATCC 29133 / PCC 73102)).